Consider the following 481-residue polypeptide: Glutamyl-tRNA(Gln) amidotransferase subunit A (481 aa).

Residues lysine 76 and serine 151 each act as charge relay system in the active site. Serine 175 (acyl-ester intermediate) is an active-site residue.

It belongs to the amidase family. GatA subfamily. In terms of assembly, heterotrimer of A, B and C subunits.

The enzyme catalyses L-glutamyl-tRNA(Gln) + L-glutamine + ATP + H2O = L-glutaminyl-tRNA(Gln) + L-glutamate + ADP + phosphate + H(+). Its function is as follows. Allows the formation of correctly charged Gln-tRNA(Gln) through the transamidation of misacylated Glu-tRNA(Gln) in organisms which lack glutaminyl-tRNA synthetase. The reaction takes place in the presence of glutamine and ATP through an activated gamma-phospho-Glu-tRNA(Gln). The polypeptide is Glutamyl-tRNA(Gln) amidotransferase subunit A (Neisseria meningitidis serogroup B (strain ATCC BAA-335 / MC58)).